The sequence spans 246 residues: 3'(2'),5'-bisphosphate nucleotidase CysQ (246 aa).

5 residues coordinate Mg(2+): glutamate 64, aspartate 83, leucine 85, aspartate 86, and aspartate 205. Glutamate 64 contributes to the substrate binding site. Substrate-binding positions include 85-88 (LDGT) and aspartate 205.

This sequence belongs to the inositol monophosphatase superfamily. CysQ family. Requires Mg(2+) as cofactor.

It localises to the cell inner membrane. The enzyme catalyses adenosine 3',5'-bisphosphate + H2O = AMP + phosphate. Functionally, converts adenosine-3',5'-bisphosphate (PAP) to AMP. This is 3'(2'),5'-bisphosphate nucleotidase CysQ from Salmonella typhimurium (strain LT2 / SGSC1412 / ATCC 700720).